Consider the following 395-residue polypeptide: Protein TAMALIN (395 aa).

Positions 1-52 (MTLRRLRKLQQKEEAAATPDPAARTPDSEVAPAAPVPTPGPPAAAATPGPPA) are disordered. Low complexity predominate over residues 16–33 (AATPDPAARTPDSEVAPA). A Phosphothreonine modification is found at Thr-77. Ser-94 bears the Phosphoserine mark. The 90-residue stretch at 101–190 (VLTLEKEDNQ…VLRLETLYGT (90 aa)) folds into the PDZ domain. The tract at residues 181 to 258 (VLRLETLYGT…GAGLLPGSLP (78 aa)) is interaction with PSCD3. Tyr-237 is subject to Phosphotyrosine. Position 270 is an omega-N-methylarginine (Arg-270). The interval 293–349 (SEPPALPPPPPPARAFGPGPAETPAVGPGPGPRAALSRSASVRCAGPGGGGGGGAPG) is disordered. Positions 296–305 (PALPPPPPPA) are enriched in pro residues. Residues 338–348 (GPGGGGGGGAP) show a composition bias toward gly residues. Position 387 is a phosphoserine (Ser-387).

Heteromer. Composed of TAMALIN, CYTH2 and at least one GRM1. Also interacts with CYTH3, GRM2, GRM3 and GRM5.

The protein localises to the cytoplasm. Its subcellular location is the perinuclear region. The protein resides in the cell membrane. It is found in the postsynaptic cell membrane. Plays a role in intracellular trafficking and contributes to the macromolecular organization of group 1 metabotropic glutamate receptors (mGluRs) at synapses. In Homo sapiens (Human), this protein is Protein TAMALIN.